The sequence spans 177 residues: MSIVKSKIRTIPDYPKPGILFRDITSLLIDPEGFQLTIGMFVERYQNAKLNKIAAIDARGFIPGAALAFQLGVGFVPIRKKGKLPGNTISESYALEYGVDHVEIHTDAIVPGDKVLIMDDLIATGGTLEASIKLIQNLKGQIHECSTIINLPDLGGAKRIKDTYGIDVFSICEFEGH.

Belongs to the purine/pyrimidine phosphoribosyltransferase family. In terms of assembly, homodimer.

It is found in the cytoplasm. The enzyme catalyses AMP + diphosphate = 5-phospho-alpha-D-ribose 1-diphosphate + adenine. Its pathway is purine metabolism; AMP biosynthesis via salvage pathway; AMP from adenine: step 1/1. In terms of biological role, catalyzes a salvage reaction resulting in the formation of AMP, that is energically less costly than de novo synthesis. The protein is Adenine phosphoribosyltransferase of Leptospira biflexa serovar Patoc (strain Patoc 1 / Ames).